Here is a 183-residue protein sequence, read N- to C-terminus: RFKKIRRLGALPGLTSKRPRSGSDLKNQLRSGKRSQYRIRLEEKQKLRFHYGLTERQLLKYVHIAGKAKGSTGQILLQLLEMRLDNILFRLGMASTIPGARQLVNHRHILVNGRIVDIPSYRCKPRDIITTKNKQRSKALIQNFIASSPHQEELPNHLTIDPFQYKGLVNKIIDSKWIGLKIN.

The S4 RNA-binding domain maps to 82–143 (MRLDNILFRL…KQRSKALIQN (62 aa)).

It belongs to the universal ribosomal protein uS4 family. Part of the 30S ribosomal subunit. Contacts protein S5. The interaction surface between S4 and S5 is involved in control of translational fidelity.

Its subcellular location is the plastid. The protein resides in the chloroplast. One of the primary rRNA binding proteins, it binds directly to 16S rRNA where it nucleates assembly of the body of the 30S subunit. In terms of biological role, with S5 and S12 plays an important role in translational accuracy. The protein is Small ribosomal subunit protein uS4c (rps4) of Babiana stricta (Baboon flower).